The primary structure comprises 210 residues: RNA chaperone ProQ (210 aa).

The interval 118-146 (KAAKPEKKRPARRVAAKGQHAKETTTNKA) is disordered. Positions 123–132 (EKKRPARRVA) are enriched in basic residues.

The protein belongs to the ProQ family.

The protein localises to the cytoplasm. Its function is as follows. RNA chaperone with significant RNA binding, RNA strand exchange and RNA duplexing activities. This chain is RNA chaperone ProQ, found in Pasteurella multocida (strain Pm70).